A 119-amino-acid polypeptide reads, in one-letter code: Large ribosomal subunit protein uL22 (119 aa).

This sequence belongs to the universal ribosomal protein uL22 family. As to quaternary structure, part of the 50S ribosomal subunit.

Its function is as follows. This protein binds specifically to 23S rRNA; its binding is stimulated by other ribosomal proteins, e.g. L4, L17, and L20. It is important during the early stages of 50S assembly. It makes multiple contacts with different domains of the 23S rRNA in the assembled 50S subunit and ribosome. In terms of biological role, the globular domain of the protein is located near the polypeptide exit tunnel on the outside of the subunit, while an extended beta-hairpin is found that lines the wall of the exit tunnel in the center of the 70S ribosome. This Bifidobacterium adolescentis (strain ATCC 15703 / DSM 20083 / NCTC 11814 / E194a) protein is Large ribosomal subunit protein uL22.